A 303-amino-acid chain; its full sequence is Bifunctional protein FolD (303 aa).

NADP(+) is bound by residues Gly-165–Ser-167, Ser-190, and Ile-231.

This sequence belongs to the tetrahydrofolate dehydrogenase/cyclohydrolase family. As to quaternary structure, homodimer.

The enzyme catalyses (6R)-5,10-methylene-5,6,7,8-tetrahydrofolate + NADP(+) = (6R)-5,10-methenyltetrahydrofolate + NADPH. The catalysed reaction is (6R)-5,10-methenyltetrahydrofolate + H2O = (6R)-10-formyltetrahydrofolate + H(+). It functions in the pathway one-carbon metabolism; tetrahydrofolate interconversion. Its function is as follows. Catalyzes the oxidation of 5,10-methylenetetrahydrofolate to 5,10-methenyltetrahydrofolate and then the hydrolysis of 5,10-methenyltetrahydrofolate to 10-formyltetrahydrofolate. This chain is Bifunctional protein FolD, found in Prochlorococcus marinus (strain NATL1A).